A 237-amino-acid polypeptide reads, in one-letter code: MSEELMKQLSNYKAQLQQVEAALSIDPDNEDLLKLQKDLQEVIELTKDLLTSQPAEGTTSTKSSETVAPSHSWRVGDHCMATWSQDGQVYEAEIEEIDNENGTAAITFAGYGNAEVMPLHMLKKVEEGRIRDEIDGKPKSKKELQAEQREYKKKKAQKKVQRMKELEQEREDQKSKWQQFNNKAYSKNKKGQVKRSIFASPESVNGKVGVGTCGIADKPMTQYNDTSKYNVRHLMPQ.

The span at 52–69 (SQPAEGTTSTKSSETVAP) shows a compositional bias: polar residues. Disordered regions lie at residues 52–73 (SQPAEGTTSTKSSETVAPSHSW) and 149–198 (REYK…RSIF). The 61-residue stretch at 72–132 (SWRVGDHCMA…KKVEEGRIRD (61 aa)) folds into the Tudor domain. A Nuclear localization signal motif is present at residues 142–160 (KELQAEQREYKKKKAQKKV). A compositionally biased stretch (basic residues) spans 151–161 (YKKKKAQKKVQ). Residues 162–175 (RMKELEQEREDQKS) are compositionally biased toward basic and acidic residues. Residues 176–185 (KWQQFNNKAY) show a composition bias toward polar residues.

It belongs to the SMN family. As to quaternary structure, associates with spliceosomes.

The protein localises to the nucleus speckle. The protein resides in the nucleus. It is found in the cajal body. Its function is as follows. Involved in spliceosome assembly. This is Survival of motor neuron-related-splicing factor 30 (smndc1) from Danio rerio (Zebrafish).